Reading from the N-terminus, the 267-residue chain is DCN1-like protein 2 (267 aa).

The segment at M1–T48 is disordered. The span at K8 to A21 shows a compositional bias: low complexity. One can recognise a DCUN1 domain in the interval H75–Q262.

The polypeptide is DCN1-like protein 2 (Dictyostelium discoideum (Social amoeba)).